The following is a 178-amino-acid chain: uncharacterized protein (178 aa).

A signal peptide spans M1–S23.

This is an uncharacterized protein from Haemophilus influenzae (strain ATCC 51907 / DSM 11121 / KW20 / Rd).